Reading from the N-terminus, the 245-residue chain is Complement C1q subcomponent subunit C (245 aa).

A signal peptide spans 1–28; it reads MDVGPSSLPHLGLKLLLLLLLLPLRGQA. Residues 31-112 form the Collagen-like domain; the sequence is GCYGIPGMPG…GIPGEPGEEG (82 aa). Pro-36, Pro-39, Pro-42, Pro-45, Pro-54, and Pro-63 each carry 4-hydroxyproline. The segment at 45–113 is disordered; sequence PGKDGYDGLP…IPGEPGEEGR (69 aa). Over residues 54–71 the composition is skewed to low complexity; that stretch reads PGPKGEPGIPAIPGIRGP. Lys-75 bears the 5-hydroxylysine mark. O-linked (Gal...) hydroxylysine glycosylation occurs at Lys-75. 4-hydroxyproline occurs at positions 81, 93, 96, 99, and 105. The segment covering 90 to 99 has biased composition (pro residues); the sequence is MGPPGMPGVP. Residues 115 to 245 form the C1q domain; it reads KQKFQSVFTV…VFSGFLLFPD (131 aa). A disulfide bond links Cys-179 and Cys-193.

Core component of the complement C1 complex, a calcium-dependent complex composed of 1 molecule of the C1Q subcomplex, 2 molecules of C1R and 2 molecules of C1S. The C1Q subcomplex is composed 18 subunits: 3 chains of C1QA, C1QB, and C1QC trimerize to form 6 collagen-like triple helices connected to six globular ligand-recognition modules (C1q domain). Post-translationally, O-linked glycans consist of Glc-Gal disaccharides bound to the oxygen atom of post-translationally added hydroxyl groups.

The protein resides in the secreted. It is found in the cell surface. Its activity is regulated as follows. The C1Q subcomplex is inhibited by sulfated molecules, such as triterpenoid sulfates, heparan sulfate, or chondroitin sulfates. Its function is as follows. Core component of the complement C1 complex, a multiprotein complex that initiates the classical pathway of the complement system, a cascade of proteins that leads to phagocytosis and breakdown of pathogens and signaling that strengthens the adaptive immune system. The classical complement pathway is initiated by the C1Q subcomplex of the C1 complex, which specifically binds IgG or IgM immunoglobulins complexed with antigens, forming antigen-antibody complexes on the surface of pathogens: C1QA, together with C1QB and C1QC, specifically recognizes and binds the Fc regions of IgG or IgM via its C1q domain. Immunoglobulin-binding activates the proenzyme C1R, which cleaves C1S, initiating the proteolytic cascade of the complement system. The C1Q subcomplex is activated by a hexamer of IgG complexed with antigens, while it is activated by a pentameric IgM. The C1Q subcomplex also recognizes and binds phosphatidylserine exposed on the surface of cells undergoing programmed cell death, possibly promoting activation of the complement system. The sequence is that of Complement C1q subcomponent subunit C from Homo sapiens (Human).